Reading from the N-terminus, the 227-residue chain is UMP-CMP kinase (227 aa).

35–40 contributes to the ATP binding site; the sequence is GAGKGT. The NMP stretch occupies residues 55–85; the sequence is SAGDLLRAEQHREGSEYGQLIQTCIKEGSIV. A ribonucleoside 5'-phosphate is bound by residues arginine 61, 83–85, 122–125, and glutamine 129; these read SIV and GFPR. The LID stretch occupies residues 159–169; that stretch reads ERGKTSGREDD. ATP is bound at residue arginine 160. 2 residues coordinate a ribonucleoside 5'-phosphate: arginine 166 and arginine 177. Valine 205 is an ATP binding site.

The protein belongs to the adenylate kinase family. UMP-CMP kinase subfamily. As to quaternary structure, monomer. It depends on Mg(2+) as a cofactor.

It localises to the cytoplasm. Its subcellular location is the nucleus. The catalysed reaction is UMP + ATP = UDP + ADP. In terms of biological role, catalyzes the phosphorylation of pyrimidine nucleoside monophosphates at the expense of ATP. Plays an important role in de novo pyrimidine nucleotide biosynthesis. Has preference for UMP and CMP as phosphate acceptors, but can also use AMP and dCMP to a lesser extent. May play a role during the formation of basidiospores in the gill tissue. This is UMP-CMP kinase (uck1) from Lentinula edodes (Shiitake mushroom).